We begin with the raw amino-acid sequence, 176 residues long: Nucleoside triphosphate/diphosphate phosphatase (176 aa).

Arginine 23 functions as the Proton donor in the catalytic mechanism. Mg(2+)-binding residues include asparagine 87, aspartate 103, aspartate 105, aspartate 107, aspartate 120, and glutamate 123.

This sequence belongs to the Ntdp family. It depends on Mg(2+) as a cofactor.

The catalysed reaction is a ribonucleoside 5'-triphosphate + H2O = a ribonucleoside 5'-diphosphate + phosphate + H(+). It carries out the reaction a ribonucleoside 5'-diphosphate + H2O = a ribonucleoside 5'-phosphate + phosphate + H(+). Has nucleoside phosphatase activity towards nucleoside triphosphates and nucleoside diphosphates. The protein is Nucleoside triphosphate/diphosphate phosphatase of Bacillus licheniformis (strain ATCC 14580 / DSM 13 / JCM 2505 / CCUG 7422 / NBRC 12200 / NCIMB 9375 / NCTC 10341 / NRRL NRS-1264 / Gibson 46).